The chain runs to 505 residues: Phosphoglycerate kinase, glycosomal (505 aa).

Positions 29, 30, 31, 32, 45, 67, 68, 70, 71, 219, 220, 256, and 257 each coordinate (2R)-3-phosphoglycerate. 2 residues coordinate ADP: G302 and A303. G302 serves as a coordination point for CDP. Residues A303 and K304 each coordinate AMP. An ATP-binding site is contributed by A303. A303 lines the Mg(2+) pocket. K304 contributes to the (2R)-3-phosphoglycerate binding site. A CDP-binding site is contributed by D307. A Mg(2+)-binding site is contributed by D307. Residues K308 and G326 each coordinate ADP. An AMP-binding site is contributed by K308. Residue K308 participates in ATP binding. G326 contacts CDP. G327 and G399 together coordinate AMP. Positions 327 and 399 each coordinate ATP. ADP-binding residues include G399 and N423. Residues G424, L426, and F429 each contribute to the CDP site. 4 residues coordinate ADP: F429, E430, D462, and T463. E430 is a binding site for AMP. The ATP site is built by E430, D462, and T463. A Mg(2+)-binding site is contributed by D462.

This sequence belongs to the phosphoglycerate kinase family. Monomer. It depends on Mg(2+) as a cofactor.

Its subcellular location is the glycosome. The catalysed reaction is (2R)-3-phosphoglycerate + ATP = (2R)-3-phospho-glyceroyl phosphate + ADP. Its pathway is carbohydrate degradation; glycolysis; pyruvate from D-glyceraldehyde 3-phosphate: step 2/5. The chain is Phosphoglycerate kinase, glycosomal (PGKA) from Crithidia fasciculata.